Here is a 132-residue protein sequence, read N- to C-terminus: Small ribosomal subunit protein uS8 (132 aa).

Belongs to the universal ribosomal protein uS8 family. Part of the 30S ribosomal subunit. Contacts proteins S5 and S12.

One of the primary rRNA binding proteins, it binds directly to 16S rRNA central domain where it helps coordinate assembly of the platform of the 30S subunit. The protein is Small ribosomal subunit protein uS8 of Clostridium botulinum (strain 657 / Type Ba4).